Here is a 395-residue protein sequence, read N- to C-terminus: MQADRSMKMGHALNPFSTSAPLDATAGPSLIPDLITRIPWPRWTLFIAILAAGVLLVSCLLCVICCYCHRHRHRKQPKDKETVGLGSARNSTTTHLVQPDVDCLEPCSGGDQQWGRLLLSLEYDFGSQEIRVGLRQAGNLKAEGTADPYAWVSVSTQSGRRHETKVHRGTLSPMFEETCCFLVPPAELPKATLKVQLWDFKRFSEHEPLGELQLPLGTVDLQHVLESWYQLGPPGTTEPEQMGELCFSLRYVPSSGSLTVVVLEARGLNPGLAEAYVKIQLMLNQRKWKKSKTSSKKGTTTPYFNEAFVFLVPVSQLQSVDLVLAVWARGLQLRTEPVGKVLLGSRASGQPLQHWADMLAHARRPIAQWHHLRSPREVDRVLALQPRLPLLRPRS.

Topologically, residues 1–44 (MQADRSMKMGHALNPFSTSAPLDATAGPSLIPDLITRIPWPRWT) are extracellular. The chain crosses the membrane as a helical; Signal-anchor for type III membrane protein span at residues 45–65 (LFIAILAAGVLLVSCLLCVIC). Residues 66 to 395 (CYCHRHRHRK…PRLPLLRPRS (330 aa)) are Cytoplasmic-facing. C2 domains follow at residues 113–229 (QWGR…ESWY) and 241–370 (QMGE…AQWH).

The protein belongs to the synaptotagmin family. As to quaternary structure, homodimer or homooligomer. Homodimerization and homooligomerization do not depend on Ca(2+). Interacts with SYNCRIP isoform 2 C-terminus. Binds inositol 1,3,4,5-tetrakisphosphate (IP4). Binds to AP2 in a Ca(2+)-independent manner. Interacts with STX1A, STX1B and STX2; the interaction is Ca(2+)-dependent. Ubiquitous. Detected in testis and brain. Expressed in primary neurons, neuroendocrine and endocrine cells.

The protein localises to the cytoplasm. It is found in the cell membrane. Its subcellular location is the cytoplasmic vesicle. It localises to the secretory vesicle. The protein resides in the acrosome. Functionally, involved in the trafficking and exocytosis of secretory vesicles in non-neuronal tissues. Mediates Ca(2+)-regulation of exocytosis acrosomal reaction in sperm. May mediate Ca(2+)-regulation of exocytosis in insulin secreted cells. This Mus musculus (Mouse) protein is Synaptotagmin-8 (Syt8).